An 89-amino-acid chain; its full sequence is Phosphocarrier protein HPr (89 aa).

The region spanning 1 to 88 (MLKQSIEIIN…DLINGYFGEG (88 aa)) is the HPr domain. His15 functions as the Pros-phosphohistidine intermediate in the catalytic mechanism. Ser46 is modified (phosphoserine; by HPrK/P).

The protein belongs to the HPr family.

Its subcellular location is the cytoplasm. Its activity is regulated as follows. Phosphorylation on Ser-46 inhibits the phosphoryl transfer from enzyme I to HPr. General (non sugar-specific) component of the phosphoenolpyruvate-dependent sugar phosphotransferase system (sugar PTS). This major carbohydrate active-transport system catalyzes the phosphorylation of incoming sugar substrates concomitantly with their translocation across the cell membrane. The phosphoryl group from phosphoenolpyruvate (PEP) is transferred to the phosphoryl carrier protein HPr by enzyme I. Phospho-HPr then transfers it to the PTS EIIA domain. This is Phosphocarrier protein HPr (ptsH) from Neisseria meningitidis serogroup A / serotype 4A (strain DSM 15465 / Z2491).